The sequence spans 431 residues: Histidinol dehydrogenase (431 aa).

NAD(+) is bound by residues Y124, Q187, and N210. Positions 236, 258, and 261 each coordinate substrate. Residues Q258 and H261 each contribute to the Zn(2+) site. Catalysis depends on proton acceptor residues E325 and H326. H326, D359, E413, and H418 together coordinate substrate. Position 359 (D359) interacts with Zn(2+). Zn(2+) is bound at residue H418.

The protein belongs to the histidinol dehydrogenase family. The cofactor is Zn(2+).

It carries out the reaction L-histidinol + 2 NAD(+) + H2O = L-histidine + 2 NADH + 3 H(+). The protein operates within amino-acid biosynthesis; L-histidine biosynthesis; L-histidine from 5-phospho-alpha-D-ribose 1-diphosphate: step 9/9. Functionally, catalyzes the sequential NAD-dependent oxidations of L-histidinol to L-histidinaldehyde and then to L-histidine. In Legionella pneumophila (strain Lens), this protein is Histidinol dehydrogenase.